A 227-amino-acid polypeptide reads, in one-letter code: Thymidylate kinase (227 aa).

16–23 (GIDGAGKT) provides a ligand contact to ATP.

The protein belongs to the thymidylate kinase family.

The catalysed reaction is dTMP + ATP = dTDP + ADP. In terms of biological role, phosphorylation of dTMP to form dTDP in both de novo and salvage pathways of dTTP synthesis. This Xanthomonas campestris pv. campestris (strain 8004) protein is Thymidylate kinase.